The sequence spans 154 residues: Putative pre-16S rRNA nuclease (154 aa).

The protein belongs to the YqgF nuclease family.

It is found in the cytoplasm. Could be a nuclease involved in processing of the 5'-end of pre-16S rRNA. The polypeptide is Putative pre-16S rRNA nuclease (Rickettsia conorii (strain ATCC VR-613 / Malish 7)).